We begin with the raw amino-acid sequence, 253 residues long: Geranylgeranylglyceryl phosphate synthase (253 aa).

Positions 28 and 53 each coordinate Mg(2+). Residues 172–178 (YLEAGSG), 203–204 (GG), and 225–226 (GN) each bind sn-glycerol 1-phosphate.

This sequence belongs to the GGGP/HepGP synthase family. Group II subfamily. Mg(2+) is required as a cofactor.

It localises to the cytoplasm. The catalysed reaction is sn-glycerol 1-phosphate + (2E,6E,10E)-geranylgeranyl diphosphate = sn-3-O-(geranylgeranyl)glycerol 1-phosphate + diphosphate. It functions in the pathway membrane lipid metabolism; glycerophospholipid metabolism. In terms of biological role, prenyltransferase that catalyzes the transfer of the geranylgeranyl moiety of geranylgeranyl diphosphate (GGPP) to the C3 hydroxyl of sn-glycerol-1-phosphate (G1P). This reaction is the first ether-bond-formation step in the biosynthesis of archaeal membrane lipids. This chain is Geranylgeranylglyceryl phosphate synthase, found in Methanocaldococcus jannaschii (strain ATCC 43067 / DSM 2661 / JAL-1 / JCM 10045 / NBRC 100440) (Methanococcus jannaschii).